A 270-amino-acid chain; its full sequence is SURF1-like protein (270 aa).

2 consecutive transmembrane segments (helical) span residues Gly-7–Tyr-29 and Tyr-246–Met-265.

The protein belongs to the SURF1 family.

It is found in the mitochondrion inner membrane. Its function is as follows. Probably involved in the biogenesis of the COX complex. This is SURF1-like protein (surf1-1) from Dictyostelium discoideum (Social amoeba).